The chain runs to 530 residues: Type 2 DNA topoisomerase 6 subunit B (530 aa).

ATP-binding positions include Asn-42, Asp-76, 96–98 (SSK), 107–113 (MYGLGVK), and Lys-427.

The protein belongs to the TOP6B family. In terms of assembly, homodimer. Heterotetramer of two Top6A and two Top6B chains.

The catalysed reaction is ATP-dependent breakage, passage and rejoining of double-stranded DNA.. Not inhibited by the DNA gyrase inhibitor novobiocin, instead inhibited by eukaryotic topoisomerase inhibitors such as m- and o-amsacrine, ellipticine, and the quinolone CP-115,953. Radicicol inhibits the ATPase activity. Relaxes both positive and negative supercoils and exhibits a strong decatenase and unknotting activity; it cannot introduce DNA supercoils. ATP is absolutely required for DNA cleavage; the nonhydrolyzable analog AMP-PNP generates nicked or linear products from a supercoiled dsDNA substrate. Generates staggered two-nucleotide long 5' overhangs. The enzyme is covalently attached transiently to the 5'-ends of the cleaved strands. The polypeptide is Type 2 DNA topoisomerase 6 subunit B (Saccharolobus shibatae (strain ATCC 51178 / DSM 5389 / JCM 8931 / NBRC 15437 / B12) (Sulfolobus shibatae)).